Here is a 410-residue protein sequence, read N- to C-terminus: F-box/WD-40 repeat-containing protein 1 (410 aa).

An F-box domain is found at 32–79 (SKECSLLPFELFEEILCRVPTKSLLRLKLTCKRWLALFNDKRFIYKHL). 2 WD repeats span residues 109-150 (PNKF…VRWI) and 269-309 (DVHN…NGVS).

The sequence is that of F-box/WD-40 repeat-containing protein 1 (FBW1) from Arabidopsis thaliana (Mouse-ear cress).